Reading from the N-terminus, the 92-residue chain is Small ribosomal subunit protein uS19 (92 aa).

Belongs to the universal ribosomal protein uS19 family.

In terms of biological role, protein S19 forms a complex with S13 that binds strongly to the 16S ribosomal RNA. The protein is Small ribosomal subunit protein uS19 of Rhodospirillum rubrum (strain ATCC 11170 / ATH 1.1.1 / DSM 467 / LMG 4362 / NCIMB 8255 / S1).